Here is an 86-residue protein sequence, read N- to C-terminus: MAWELKKGGENYIFVYVSGGYVILGSRDRTIQSSAEYCSIEDFIIKGQLQQPIVQEFGEKTFKEIYDKVARVHQQRNQKTTAPQSS.

This is an uncharacterized protein from Dictyostelium discoideum (Social amoeba).